A 98-amino-acid polypeptide reads, in one-letter code: NADH-ubiquinone oxidoreductase chain 4L (98 aa).

3 helical membrane passes run 2–22, 29–49, and 61–81; these read PSIS…MLIF, SLLC…LTIL, and ILLL…LVTV.

The protein belongs to the complex I subunit 4L family. As to quaternary structure, core subunit of respiratory chain NADH dehydrogenase (Complex I) which is composed of 45 different subunits.

The protein localises to the mitochondrion inner membrane. The catalysed reaction is a ubiquinone + NADH + 5 H(+)(in) = a ubiquinol + NAD(+) + 4 H(+)(out). In terms of biological role, core subunit of the mitochondrial membrane respiratory chain NADH dehydrogenase (Complex I) which catalyzes electron transfer from NADH through the respiratory chain, using ubiquinone as an electron acceptor. Part of the enzyme membrane arm which is embedded in the lipid bilayer and involved in proton translocation. The polypeptide is NADH-ubiquinone oxidoreductase chain 4L (MT-ND4L) (Eulemur mongoz (Mongoose lemur)).